The sequence spans 1040 residues: Multidrug resistance protein MdtB (1040 aa).

12 consecutive transmembrane segments (helical) span residues 16–36 (FIMRPVATTLLMVAILLAGII), 347–367 (LMMAIALVVMIIYLFLRNIPA), 369–389 (IIPGVAVPLSLIGTFAVMVFL), 396–416 (LTLMALTIATGFVVDDAIVVI), 440–460 (IGFTIISLTFSLIAVLIPLLF), 472–492 (FAITLAVAILISAVVSLTLTP), 537–557 (WLTLSVALSTLLLSVLLWVFI), 863–883 (LGSTVWLIVAAVVAMYIVLGI), 888–908 (FIHPITILSTLPTAGVGALLA), 911–931 (IAGSELDVIAIIGIILLIGIV), 968–988 (ILMTTLAALLGALPLMLSTGV), and 998–1018 (IGMVGGLIVSQVLTLFTTPVI).

It belongs to the resistance-nodulation-cell division (RND) (TC 2.A.6) family. MdtB subfamily. In terms of assembly, part of a tripartite efflux system composed of MdtA, MdtB and MdtC. MdtB forms a heteromultimer with MdtC.

Its subcellular location is the cell inner membrane. Functionally, the MdtABC tripartite complex confers resistance against novobiocin and deoxycholate. The polypeptide is Multidrug resistance protein MdtB (Escherichia coli O81 (strain ED1a)).